The following is a 459-amino-acid chain: MFS-type transporter SLC18B1 (459 aa).

Methionine 1 carries the N-acetylmethionine modification. Positions 1–10 (MDEAGSPAPA) are enriched in low complexity. The segment at 1–27 (MDEAGSPAPAGTGGGDDPGGSTRETSR) is disordered. Topologically, residues 1 to 33 (MDEAGSPAPAGTGGGDDPGGSTRETSRRLSREQ) are cytoplasmic. At serine 21 the chain carries Phosphoserine. Residues 34–54 (IFVLVSAASMNLGCMMTYSIL) traverse the membrane as a helical segment. At 55–70 (GPFFPKEAEKKGASNT) the chain is on the extracellular side. Residues 71-91 (MIGMIFGCYALFELLASLVFG) traverse the membrane as a helical segment. Topologically, residues 92-100 (KYLVHIGAK) are cytoplasmic. A helical transmembrane segment spans residues 101–121 (FMFIAGMFVSGGVTILFGVLD). The Extracellular segment spans residues 122 to 127 (QLPEGP). Residues 128 to 148 (IFIAMCFLVRIVDAIGFGAAI) form a helical membrane-spanning segment. Residues 149–167 (TASSSILAKAFPNNVATVM) lie on the Cytoplasmic side of the membrane. The chain crosses the membrane as a helical span at residues 168-188 (GSLEVFSGLGLVAGPPLGGLL). Over 189–195 (YQSFGYE) the chain is Extracellular. The helical transmembrane segment at 196 to 216 (VPFIFLGCIVLLMIPLNLYIL) threads the bilayer. Residues 217-235 (PSYAQESDPGKQSFWKLVT) are Cytoplasmic-facing. The helical transmembrane segment at 236–256 (LPKMGLLAFVIISLSSCFGFL) threads the bilayer. The Extracellular segment spans residues 257 to 274 (DPTLSLFVMEKFSLSTGY). The helical transmembrane segment at 275–295 (VGLVFLGLSLSYAISSPLFGL) threads the bilayer. Residues 296 to 306 (LSDKMPTLRKW) are Cytoplasmic-facing. Residues 307 to 327 (LLVFGNLITAGCYMLLGPVPL) form a helical membrane-spanning segment. Topologically, residues 328–333 (LHIKSQ) are extracellular. The helical transmembrane segment at 334 to 354 (LWLLVLVLVVNGISAGMSIIP) threads the bilayer. Residues 355–379 (TFPEMLSCAYANGFEDSISTLGLVS) lie on the Cytoplasmic side of the membrane. A helical transmembrane segment spans residues 380 to 400 (GLFGAMWSVGAFMGPILGGFL). At 401 to 409 (CEKIGFEWA) the chain is on the extracellular side. A helical membrane pass occupies residues 410-430 (AAMQGLWTLLSGVSMALFYLW). Topologically, residues 431–459 (EDSTARRRSKAQNSLGTEEERAALLPNDT) are cytoplasmic. Positions 440-459 (KAQNSLGTEEERAALLPNDT) are disordered.

Belongs to the major facilitator superfamily. Widely expressed, with highest expression in the lung, pancreas and kidney. High expression in the CNS, particularly in the hypothalamus, the thalamus and the cerebellum. In the forebrain, abundantly expressed in the telencephalon, especially in the cerebral cortex layers, except layer 1, as well as in the induseum griseum, the piriform area, the taenia tecta, dorsal part and in the entorhinal area, lateral part. Lower levels in the bed anterior olfactory nucleus, posteroventral part and in layer two of the olfactory tubercle. In the amygdala, high levels observed in the intercalated nucleus and the medial nucleus. In the diencephalon, expressed in the nuclei in both the hypothalamus and thalamus. Among the hypothalamic areas, strongest expression in the arcuate nucleus and in the ventromedial nucleus, as well as in the suprachiasmatic nucleus, anterior nucleus, especially in its central part, and in the magnocellular division of the paraventricular nucleus. In the thalamus, highest levels in the medial habenula. Expression also observed in the paraventricular thalamic nucleus, parataenial nucleus, central medial nucleus, intermediodorsal nucleus and lateral dorsal nucleus. In the hindbrain, detected in the cerebellum and in the pons. In the midbrain and the medulla, expression levels were modest. In the midbrain, highest expression in the periaqueductal gray and all subdivisions of the interpeduncular nucleus, except for the caudal part. In the pons, the strongest labeling was seen in the nucleus incertus and in the tegmental nucleus. Expressed in bone marrow-derived mast cells (at protein level).

Its subcellular location is the cytoplasmic vesicle. It localises to the secretory vesicle membrane. The protein localises to the secretory vesicle. The protein resides in the synaptic vesicle membrane. It catalyses the reaction spermine(in) + n H(+)(out) = spermine(out) + n H(+)(in). It carries out the reaction spermidine(in) + n H(+)(out) = spermidine(out) + n H(+)(in). The enzyme catalyses serotonin(in) + n H(+)(out) = serotonin(out) + n H(+)(in). Proton-coupled polyamine antiporter involved in the translocation of polyamines from cytosol into secretory vesicles prior to their release via exocytosis. Uses the electrochemical proton gradient generated by a V-type proton-pumping ATPase to couple the efflux of protons with the uptake of a polyamine molecule. Facilitates vesicular storage of spermine and spermidine in astrocytes with an impact on glutamatergic neuronal transmission and memory formation. Upon antigen stimulation, regulates polyamine accumulation and release in mast cell secretory granules, which in turn potentiates mast cell degranulation and histamine secretion. The polypeptide is MFS-type transporter SLC18B1 (Mus musculus (Mouse)).